The sequence spans 382 residues: ATP phosphoribosyltransferase regulatory subunit (382 aa).

This sequence belongs to the class-II aminoacyl-tRNA synthetase family. HisZ subfamily. As to quaternary structure, heteromultimer composed of HisG and HisZ subunits.

The protein resides in the cytoplasm. Its pathway is amino-acid biosynthesis; L-histidine biosynthesis; L-histidine from 5-phospho-alpha-D-ribose 1-diphosphate: step 1/9. In terms of biological role, required for the first step of histidine biosynthesis. May allow the feedback regulation of ATP phosphoribosyltransferase activity by histidine. This is ATP phosphoribosyltransferase regulatory subunit from Lacticaseibacillus paracasei (strain ATCC 334 / BCRC 17002 / CCUG 31169 / CIP 107868 / KCTC 3260 / NRRL B-441) (Lactobacillus paracasei).